The following is a 280-amino-acid chain: Ribosomal RNA small subunit methyltransferase A (280 aa).

6 residues coordinate S-adenosyl-L-methionine: histidine 13, leucine 15, glycine 40, glutamate 61, aspartate 85, and asparagine 106. A disordered region spans residues 258–280 (RPPADVEDANAPHTEQGKGDNSQ).

The protein belongs to the class I-like SAM-binding methyltransferase superfamily. rRNA adenine N(6)-methyltransferase family. RsmA subfamily.

The protein localises to the cytoplasm. The catalysed reaction is adenosine(1518)/adenosine(1519) in 16S rRNA + 4 S-adenosyl-L-methionine = N(6)-dimethyladenosine(1518)/N(6)-dimethyladenosine(1519) in 16S rRNA + 4 S-adenosyl-L-homocysteine + 4 H(+). Its function is as follows. Specifically dimethylates two adjacent adenosines (A1518 and A1519) in the loop of a conserved hairpin near the 3'-end of 16S rRNA in the 30S particle. May play a critical role in biogenesis of 30S subunits. This chain is Ribosomal RNA small subunit methyltransferase A, found in Alcanivorax borkumensis (strain ATCC 700651 / DSM 11573 / NCIMB 13689 / SK2).